Consider the following 180-residue polypeptide: Cell division protein SepF (180 aa).

The interval 14–81 (NSEDDEEFDN…SKITPISKSS (68 aa)) is disordered. Positions 15–35 (SEDDEEFDNEDYYLDDEEEEE) are enriched in acidic residues. Over residues 57–68 (TRRDTTPKEKPV) the composition is skewed to basic and acidic residues. Residues 69 to 79 (KTTSKITPISK) are compositionally biased toward low complexity.

It belongs to the SepF family. Homodimer. Interacts with FtsZ.

The protein localises to the cytoplasm. In terms of biological role, cell division protein that is part of the divisome complex and is recruited early to the Z-ring. Probably stimulates Z-ring formation, perhaps through the cross-linking of FtsZ protofilaments. Its function overlaps with FtsA. The sequence is that of Cell division protein SepF from Agathobacter rectalis (strain ATCC 33656 / DSM 3377 / JCM 17463 / KCTC 5835 / VPI 0990) (Eubacterium rectale).